The following is a 189-amino-acid chain: Probable UbiX-like flavin prenyltransferase (189 aa).

Residues 9–11 (GAS), S36, 87–90 (SMKT), and R122 contribute to the FMN site.

Belongs to the UbiX/PAD1 family. YclB subfamily. In terms of assembly, homododecamer.

The enzyme catalyses dimethylallyl phosphate + FMNH2 = prenylated FMNH2 + phosphate. In terms of biological role, involved in the non-oxidative decarboxylation and detoxification of phenolic derivatives under anaerobic conditions. Flavin prenyltransferase that catalyzes the synthesis of the prenylated FMN cofactor (prenyl-FMN) for phenolic acid decarboxylase. This chain is Probable UbiX-like flavin prenyltransferase, found in Sedimentibacter hydroxybenzoicus (Clostridium hydroxybenzoicum).